Here is a 521-residue protein sequence, read N- to C-terminus: GMC-type oxidoreductase acuG (521 aa).

FAD is bound by residues 14 to 15 (TV), 34 to 35 (EA), Leu82, 90 to 93 (NYGL), Ala492, and 503 to 504 (YQ).

The protein belongs to the GMC oxidoreductase family. FAD serves as cofactor.

The protein operates within secondary metabolite biosynthesis. GMC-type oxidoreductase; part of the gene cluster that mediates the biosynthesis of aculins. The pathway begins with the synthesis of 6-methylsalicylic acid by the polyketide synthase (PKS) acuA via condensation of acetate and malonate units. The 6-methylsalicylic acid decarboxylase acuB then catalyzes the decarboxylation of 6-methylsalicylic acid to yield m-cresol (also known as 3-methylphenol). These first reactions occur in the cytosol. The intermediate m-cresol is then transported into the endoplasmic reticulum where the cytochrome P450 monooxygenase acuC converts it to m-hydroxybenzyl alcohol, which is further converted to gentisyl alcohol by the cytochrome P450 monooxygenase acuD. Gentisyl alcohol is further oxidized by the oxidoreductase acuE that probably catalyzes hydroxylation of the aromatic ring. The aromatic system might then be opened by oxidation through a Baeyer-Villiger type of oxidation, which could be catalyzed by acuF, with the carboxylic acid at C-1 subsequently reduced to an aldehyde by acuG. Subsequently, a hemiacetal is formed, before the dehydrogenase acuH would reduce the double bond between C-4 and C-6. Finally, keto-enol tautomerism results in formation of aculinic acid, which exists as two diastereomers (both R/S configurations at C-1) by non-enzymatic hemiacetal formation. The carboxypeptidase acuI could be involved in the linking of aculinic acid to an aculene A moiety produced by the aculene biosynthesis cluster and which leads to the production of aculin A. AcuI may also be involved in the attachment of proline to aculinic acid to form epi-aculins A and B. The polypeptide is GMC-type oxidoreductase acuG (Aspergillus aculeatus (strain ATCC 16872 / CBS 172.66 / WB 5094)).